Consider the following 188-residue polypeptide: Acireductone dioxygenase (188 aa).

Residues histidine 97, histidine 99, glutamate 103, and histidine 141 each contribute to the Fe(2+) site. Ni(2+) contacts are provided by histidine 97, histidine 99, glutamate 103, and histidine 141.

Belongs to the acireductone dioxygenase (ARD) family. As to quaternary structure, monomer. Requires Fe(2+) as cofactor. The cofactor is Ni(2+).

It carries out the reaction 1,2-dihydroxy-5-(methylsulfanyl)pent-1-en-3-one + O2 = 3-(methylsulfanyl)propanoate + CO + formate + 2 H(+). The enzyme catalyses 1,2-dihydroxy-5-(methylsulfanyl)pent-1-en-3-one + O2 = 4-methylsulfanyl-2-oxobutanoate + formate + 2 H(+). It participates in amino-acid biosynthesis; L-methionine biosynthesis via salvage pathway; L-methionine from S-methyl-5-thio-alpha-D-ribose 1-phosphate: step 5/6. Its function is as follows. Catalyzes 2 different reactions between oxygen and the acireductone 1,2-dihydroxy-3-keto-5-methylthiopentene (DHK-MTPene) depending upon the metal bound in the active site. Fe-containing acireductone dioxygenase (Fe-ARD) produces formate and 2-keto-4-methylthiobutyrate (KMTB), the alpha-ketoacid precursor of methionine in the methionine recycle pathway. Ni-containing acireductone dioxygenase (Ni-ARD) produces methylthiopropionate, carbon monoxide and formate, and does not lie on the methionine recycle pathway. The chain is Acireductone dioxygenase from Xanthomonas oryzae pv. oryzae (strain MAFF 311018).